The chain runs to 362 residues: Cyclic di-GMP phosphodiesterase PdeL (362 aa).

The HTH luxR-type domain maps to 18-83 (HLSLPGSVSE…TFWRDIFFQY (66 aa)). A DNA-binding region (H-T-H motif) is located at residues 42–61 (VTEISQYRNRSAKTISHQKK). One can recognise an EAL domain in the interval 106–360 (HIVTPEAISL…KFISEWVMKA (255 aa)). Residue glutamine 127 participates in substrate binding. Glutamate 141 is a Mg(2+) binding site. Substrate is bound by residues 144–145 (VR) and asparagine 200. 3 residues coordinate Mg(2+): asparagine 200, glutamate 232, and aspartate 262. Residues aspartate 262, lysine 286, 319–322 (EGVE), and tyrosine 341 each bind substrate.

In terms of assembly, is in a fast thermodynamic monomer-homodimer equilibrium. Dimerization is required for PDE activity. Dimerization affinity is increased about 100-fold upon substrate binding. It depends on Mg(2+) as a cofactor. Mn(2+) serves as cofactor.

It carries out the reaction 3',3'-c-di-GMP + H2O = 5'-phosphoguanylyl(3'-&gt;5')guanosine + H(+). Its activity is regulated as follows. Strongly inhibited by Ca(2+). Its function is as follows. Acts both as an enzyme and as a c-di-GMP sensor to couple transcriptional activity to the c-di-GMP status of the cell. Phosphodiesterase (PDE) that catalyzes the hydrolysis of cyclic-di-GMP (c-di-GMP) to 5'-pGpG. Also acts as a transcription factor to control its own expression. The sequence is that of Cyclic di-GMP phosphodiesterase PdeL from Escherichia coli (strain K12).